A 509-amino-acid polypeptide reads, in one-letter code: Ribonuclease E/G-like protein (509 aa).

Positions S35–R117 constitute an S1 motif domain. D296 and D339 together coordinate Mg(2+).

This sequence belongs to the RNase E/G family. It depends on Mg(2+) as a cofactor.

Its subcellular location is the plastid. The protein localises to the chloroplast stroma. Involved in intercistronic processing of primary transcripts from chloroplast operons. The endonucleolytic activity of the enzyme depends on the number of phosphates at the 5' end, is inhibited by structured RNA, and preferentially cleaves A/U-rich sequences. This is Ribonuclease E/G-like protein (rne) from Pyropia yezoensis (Susabi-nori).